The sequence spans 382 residues: Mannitol-1-phosphate 5-dehydrogenase (382 aa).

An NAD(+)-binding site is contributed by 3–14 (AVHFGAGNIGRG).

The protein belongs to the mannitol dehydrogenase family.

It carries out the reaction D-mannitol 1-phosphate + NAD(+) = beta-D-fructose 6-phosphate + NADH + H(+). The polypeptide is Mannitol-1-phosphate 5-dehydrogenase (Aliivibrio salmonicida (strain LFI1238) (Vibrio salmonicida (strain LFI1238))).